Here is a 246-residue protein sequence, read N- to C-terminus: Chloroplastic group IIB intron splicing facilitator CRS2-A, chloroplastic (246 aa).

The N-terminal 34 residues, 1 to 34 (MFCASSSPITSPLYPKAYKFSQTKSNSKRFSSLR), are a transit peptide targeting the chloroplast. Tyr-64 is a tRNA binding site. The active-site Proton acceptor is His-69. Positions 114, 116, and 162 each coordinate tRNA.

It belongs to the PTH family. CRS2 subfamily. In terms of assembly, part of large ribonucleo-protein complexes that include group IIB introns and either CAF1 or CAF2.

The protein resides in the plastid. It is found in the chloroplast stroma. Functionally, required for the splicing of group IIB introns in chloroplasts. This Arabidopsis thaliana (Mouse-ear cress) protein is Chloroplastic group IIB intron splicing facilitator CRS2-A, chloroplastic (CRS2A).